Consider the following 404-residue polypeptide: Probable tRNA sulfurtransferase (404 aa).

Positions 60-165 (TAVAESLKQV…EEAAYLSYET (106 aa)) constitute a THUMP domain. ATP-binding positions include 183–184 (ML), 208–209 (HF), Arg265, Gly287, and Gln296.

This sequence belongs to the ThiI family.

It localises to the cytoplasm. The catalysed reaction is [ThiI sulfur-carrier protein]-S-sulfanyl-L-cysteine + a uridine in tRNA + 2 reduced [2Fe-2S]-[ferredoxin] + ATP + H(+) = [ThiI sulfur-carrier protein]-L-cysteine + a 4-thiouridine in tRNA + 2 oxidized [2Fe-2S]-[ferredoxin] + AMP + diphosphate. It carries out the reaction [ThiS sulfur-carrier protein]-C-terminal Gly-Gly-AMP + S-sulfanyl-L-cysteinyl-[cysteine desulfurase] + AH2 = [ThiS sulfur-carrier protein]-C-terminal-Gly-aminoethanethioate + L-cysteinyl-[cysteine desulfurase] + A + AMP + 2 H(+). Its pathway is cofactor biosynthesis; thiamine diphosphate biosynthesis. Functionally, catalyzes the ATP-dependent transfer of a sulfur to tRNA to produce 4-thiouridine in position 8 of tRNAs, which functions as a near-UV photosensor. Also catalyzes the transfer of sulfur to the sulfur carrier protein ThiS, forming ThiS-thiocarboxylate. This is a step in the synthesis of thiazole, in the thiamine biosynthesis pathway. The sulfur is donated as persulfide by IscS. This chain is Probable tRNA sulfurtransferase, found in Streptococcus pneumoniae serotype 2 (strain D39 / NCTC 7466).